A 1233-amino-acid chain; its full sequence is Hemocyanin A-type, units Ode to Odg (1233 aa).

Residues 1–4 (EGNE) form an ODD region. The segment at 5-422 (YLVRKNVERL…KQDADIDIPL (418 aa)) is ODE. Cu cation is bound at residue H45. The cysteines at positions 51 and 62 are disulfide-linked. Positions 63 to 65 (CLH) form a cross-link, 2'-(S-cysteinyl)-histidine (Cys-His). H65, H74, H186, H190, and H217 together coordinate Cu cation. 2 cysteine pairs are disulfide-bonded: C176/C243 and C334/C340. N392 carries N-linked (GlcNAc...) asparagine glycosylation. The ODF stretch occupies residues 423–839 (NHIRRNVESL…KEIEKEAVRG (417 aa)). H463 is a Cu cation binding site. A disulfide bond links C468 and C478. Positions 479–481 (CLH) form a cross-link, 2'-(S-cysteinyl)-histidine (Cys-His). Positions 481 and 490 each coordinate Cu cation. Residue N538 is glycosylated (N-linked (GlcNAc...) asparagine). Cystine bridges form between C589/C656 and C743/C748. Residues H599, H603, and H630 each coordinate Cu cation. The segment at 840–1233 (TIIRKNVNSL…VFLAPAKTTH (394 aa)) is ODG. Cu cation is bound at residue H880. C886 and C896 are joined by a disulfide. N890 is a glycosylation site (N-linked (GlcNAc...) asparagine). Positions 897 to 899 (CQH) form a cross-link, 2'-(S-cysteinyl)-histidine (Cys-His). The Cu cation site is built by H899, H908, H1008, H1012, and H1039. Cystine bridges form between C998–C1065 and C1152–C1158.

Belongs to the tyrosinase family. Hemocyanin subfamily. Decamers of large identical subunits (350 kDa), each containing 7 globular oxygen-binding domains: ODA, ODB, ODC, ODD, ODE, ODF, and ODG. Cu(2+) serves as cofactor.

Hemocyanins are copper-containing oxygen carriers occurring freely dissolved in the hemolymph of many mollusks and arthropods. This is Hemocyanin A-type, units Ode to Odg from Enteroctopus dofleini (North Pacific giant octopus).